The chain runs to 93 residues: Alpha-defensin 6/12 (93 aa).

Residues 1–19 form the signal peptide; sequence MKTLILLSALVLLAFQVQA. Residues 20–60 constitute a propeptide that is removed on maturation; that stretch reads DPIQNTDEETKTEEQPGEEDQAVSVSFGDPEGTSLQEESLR. A disordered region spans residues 23–54; it reads QNTDEETKTEEQPGEEDQAVSVSFGDPEGTSL. 3 disulfide bridges follow: C64–C92, C66–C81, and C71–C91.

This sequence belongs to the alpha-defensin family. In terms of tissue distribution, paneth cells of the small bowel.

The protein localises to the secreted. In terms of biological role, has broad-spectrum antimicrobial properties. Has antibacterial activity against the Gram-positive bacterium L.monocytogenes EGD and the Gram-negative bacteria E.coli ML-35p and avirulent S.typhimurium 7953, but not against the mouse-virulent S.typhimurium 14028S. Probably contributes to the antimicrobial barrier function of the small bowel mucosa. The chain is Alpha-defensin 6/12 (Defa6) from Mus musculus (Mouse).